The chain runs to 157 residues: Small ribosomal subunit protein uS7 (157 aa).

It belongs to the universal ribosomal protein uS7 family. Part of the 30S ribosomal subunit. Contacts proteins S9 and S11.

One of the primary rRNA binding proteins, it binds directly to 16S rRNA where it nucleates assembly of the head domain of the 30S subunit. Is located at the subunit interface close to the decoding center, probably blocks exit of the E-site tRNA. In Leptospira biflexa serovar Patoc (strain Patoc 1 / Ames), this protein is Small ribosomal subunit protein uS7.